Consider the following 379-residue polypeptide: Ribosomal RNA small subunit methyltransferase H (379 aa).

S-adenosyl-L-methionine contacts are provided by residues 71–73 (GGH), Glu90, Asp157, and His164.

This sequence belongs to the methyltransferase superfamily. RsmH family.

It is found in the cytoplasm. It catalyses the reaction cytidine(1402) in 16S rRNA + S-adenosyl-L-methionine = N(4)-methylcytidine(1402) in 16S rRNA + S-adenosyl-L-homocysteine + H(+). Functionally, specifically methylates the N4 position of cytidine in position 1402 (C1402) of 16S rRNA. The protein is Ribosomal RNA small subunit methyltransferase H of Treponema pallidum (strain Nichols).